Here is a 180-residue protein sequence, read N- to C-terminus: NADH-quinone oxidoreductase subunit I (180 aa).

2 consecutive 4Fe-4S ferredoxin-type domains span residues 50–80 and 90–119; these read LTRDPDGEERCVACNLCAVACPVGCISLQKA and EFFRINFSRCIFCGMCEEACPTTAIQMTPD. [4Fe-4S] cluster contacts are provided by cysteine 60, cysteine 63, cysteine 66, cysteine 70, cysteine 99, cysteine 102, cysteine 105, and cysteine 109.

This sequence belongs to the complex I 23 kDa subunit family. As to quaternary structure, NDH-1 is composed of 14 different subunits. Subunits NuoA, H, J, K, L, M, N constitute the membrane sector of the complex. It depends on [4Fe-4S] cluster as a cofactor.

The protein localises to the cell inner membrane. The enzyme catalyses a quinone + NADH + 5 H(+)(in) = a quinol + NAD(+) + 4 H(+)(out). Functionally, NDH-1 shuttles electrons from NADH, via FMN and iron-sulfur (Fe-S) centers, to quinones in the respiratory chain. The immediate electron acceptor for the enzyme in this species is believed to be ubiquinone. Couples the redox reaction to proton translocation (for every two electrons transferred, four hydrogen ions are translocated across the cytoplasmic membrane), and thus conserves the redox energy in a proton gradient. This Acinetobacter baylyi (strain ATCC 33305 / BD413 / ADP1) protein is NADH-quinone oxidoreductase subunit I.